Consider the following 218-residue polypeptide: GTP cyclohydrolase 1 (218 aa).

Residues Cys109, His112, and Cys180 each contribute to the Zn(2+) site.

The protein belongs to the GTP cyclohydrolase I family. In terms of assembly, toroid-shaped homodecamer, composed of two pentamers of five dimers.

It catalyses the reaction GTP + H2O = 7,8-dihydroneopterin 3'-triphosphate + formate + H(+). Its pathway is cofactor biosynthesis; 7,8-dihydroneopterin triphosphate biosynthesis; 7,8-dihydroneopterin triphosphate from GTP: step 1/1. The chain is GTP cyclohydrolase 1 from Actinobacillus pleuropneumoniae serotype 5b (strain L20).